The chain runs to 251 residues: MRKPIIAGNWKMNKTLSEAVSFVEEVKGQIPAASAVDAVVCSPALFLERLVAATQGTDLKVGAQNMHFEKNGAFTGEISPVALSDLKVSYVVLGHSERREMFAETDETVNKKTLAAFEHGLTPIVCCGETLEERESGKTFDLVAGQVTKALAGLTEEQVKATVIAYEPIWAIGTGKSSSAEDANEVCAHIRKVVAEAVSPAAAEAVRIQYGGSVKPGNIKEYMAQPDIDGALVGGASLEPASFLGLLEAVK.

9–11 serves as a coordination point for substrate; that stretch reads NWK. Catalysis depends on H95, which acts as the Electrophile. The active-site Proton acceptor is E167. Substrate is bound by residues G173, S213, and 234–235; that span reads GG. S213 is subject to Phosphoserine.

Belongs to the triosephosphate isomerase family. In terms of assembly, homodimer.

The protein resides in the cytoplasm. The enzyme catalyses D-glyceraldehyde 3-phosphate = dihydroxyacetone phosphate. It functions in the pathway carbohydrate biosynthesis; gluconeogenesis. It participates in carbohydrate degradation; glycolysis; D-glyceraldehyde 3-phosphate from glycerone phosphate: step 1/1. Functionally, involved in the gluconeogenesis. Catalyzes stereospecifically the conversion of dihydroxyacetone phosphate (DHAP) to D-glyceraldehyde-3-phosphate (G3P). The chain is Triosephosphate isomerase from Bacillus cytotoxicus (strain DSM 22905 / CIP 110041 / 391-98 / NVH 391-98).